The chain runs to 270 residues: Probable thioesterase BOA10 (270 aa).

Belongs to the AMT4 thioesterase family.

It participates in polyketide biosynthesis. Functionally, probable thioesterase; part of the gene cluster B that mediates the biosynthesis of botcinic acid and its botcinin derivatives, acetate-derived polyketides that contribute to virulence when combined with the sesquiterpene botrydial. Botcinic acid and its derivatives have been shown to induce chlorosis and necrosis during host plant infection, but also have antifungal activities. Two polyketide synthases, BOA6 and BOA9, are involved in the biosynthesis of botcinins. BOA6 mediates the formation of the per-methylated tetraketide core by condensation of four units of malonyl-CoA with one unit of acetyl-CoA, which would be methylated in activated methylene groups to yield a bicyclic acid intermediate that could then either be converted to botrylactone derivatives or lose the starter acetate unit through a retro-Claisen type C-C bond cleavage to yield botcinin derivatives. The second polyketide synthase, BOA9, is probably required for the biosynthesis of the tetraketide side chain of botcinins. The methyltransferase (MT) domain within BOA6 is probably responsible for the incorporation of four methyl groups. The trans-enoyl reductase BOA5 might take over the enoyl reductase function of BOA6 that misses an ER domain. The monooxygenases BOA2, BOA3 and BOA4 might be involved in further hydroxylations at C4, C5 and C8, whereas BOA7, close to BOA9, could potentially be involved in the hydroxylation at C4 in the side chain of botcinins. This Botryotinia fuckeliana (strain B05.10) (Noble rot fungus) protein is Probable thioesterase BOA10.